The following is a 50-amino-acid chain: Defensin-like protein 1 (50 aa).

Disulfide bonds link cysteine 3–cysteine 50, cysteine 14–cysteine 35, cysteine 20–cysteine 44, and cysteine 24–cysteine 46.

Belongs to the DEFL family.

It localises to the secreted. In terms of biological role, possesses antimicrobial activity sensitive to inorganic cations. Has no inhibitory effect on insect gut alpha-amylase. Induces potential changes in fungal membranes and increased K+ efflux and Ca(2+) uptake. Interacts with sphingolipids and ergosterols found in fungal plasma membranes. The polypeptide is Defensin-like protein 1 (Dahlia merckii (Bedding dahlia)).